The primary structure comprises 207 residues: Large ribosomal subunit protein uL4 (207 aa).

Positions 56 to 77 are disordered; sequence FVSGGGKKPWRQKGTGRARHGS. The span at 63 to 77 shows a compositional bias: basic residues; that stretch reads KPWRQKGTGRARHGS.

Belongs to the universal ribosomal protein uL4 family. Part of the 50S ribosomal subunit.

Its function is as follows. One of the primary rRNA binding proteins, this protein initially binds near the 5'-end of the 23S rRNA. It is important during the early stages of 50S assembly. It makes multiple contacts with different domains of the 23S rRNA in the assembled 50S subunit and ribosome. In terms of biological role, forms part of the polypeptide exit tunnel. In Phytoplasma australiense, this protein is Large ribosomal subunit protein uL4.